Consider the following 378-residue polypeptide: Succinyl-diaminopimelate desuccinylase (378 aa).

Residue histidine 68 participates in Zn(2+) binding. Aspartate 70 is a catalytic residue. Residue aspartate 101 coordinates Zn(2+). The Proton acceptor role is filled by glutamate 135. Residues glutamate 136, glutamate 164, and histidine 350 each coordinate Zn(2+).

It belongs to the peptidase M20A family. DapE subfamily. As to quaternary structure, homodimer. Zn(2+) serves as cofactor. It depends on Co(2+) as a cofactor.

It carries out the reaction N-succinyl-(2S,6S)-2,6-diaminopimelate + H2O = (2S,6S)-2,6-diaminopimelate + succinate. Its pathway is amino-acid biosynthesis; L-lysine biosynthesis via DAP pathway; LL-2,6-diaminopimelate from (S)-tetrahydrodipicolinate (succinylase route): step 3/3. Its function is as follows. Catalyzes the hydrolysis of N-succinyl-L,L-diaminopimelic acid (SDAP), forming succinate and LL-2,6-diaminopimelate (DAP), an intermediate involved in the bacterial biosynthesis of lysine and meso-diaminopimelic acid, an essential component of bacterial cell walls. In Acinetobacter baumannii (strain ACICU), this protein is Succinyl-diaminopimelate desuccinylase.